The primary structure comprises 489 residues: Fumarate reductase (CoM/CoB) subunit B (489 aa).

In terms of domain architecture, 2Fe-2S ferredoxin-type spans 2–89; sequence INVKVLRFEP…GAVIEPVDLP (88 aa). The [2Fe-2S] cluster site is built by Cys53, Cys58, Cys61, and Cys73. 2 consecutive 4Fe-4S ferredoxin-type domains span residues 124–158 and 178–209; these read PEDYQDTKKLRGCIECFSCISSCPVIKESTEYAGP and AAGGVEEGLYCCTTCGKCAEVCPKELNVPGDA. The [4Fe-4S] cluster site is built by Cys136, Cys139, Cys142, Cys146, Cys189, Cys192, Cys195, and Cys199.

Subunit B of the heterodimeric fumarate reductase of methanogenic Archaea, composed of subunits A (TfrA) and B (TfrB). The cofactor is [2Fe-2S] cluster. [4Fe-4S] cluster is required as a cofactor.

It localises to the cytoplasm. The enzyme catalyses coenzyme B + coenzyme M + fumarate = coenzyme M-coenzyme B heterodisulfide + succinate. Functionally, catalyzes the reduction of fumarate with reduced coenzyme M (CoM-S-H) and coenzyme B (CoB-S-H). In vitro, is able to reduces fumarate with reduced benzyl viologen, oxidize CoM-S-H and CoB-S-H to CoM-S-S-CoB with methylene blue, and reduce CoM-S-S-CoB with reduced benzyl viologen. The enzyme has specificity for the two thiol compounds as the CoB--CoM heterodisulfide reductase. The enzyme is very sensitive to oxygen. In Methanothermobacter marburgensis (strain ATCC BAA-927 / DSM 2133 / JCM 14651 / NBRC 100331 / OCM 82 / Marburg) (Methanobacterium thermoautotrophicum), this protein is Fumarate reductase (CoM/CoB) subunit B.